The sequence spans 137 residues: Large-conductance mechanosensitive channel (137 aa).

The next 2 helical transmembrane spans lie at 9–29 (AFAV…GAAF) and 79–99 (IQTI…VKVI).

The protein belongs to the MscL family. As to quaternary structure, homopentamer.

It is found in the cell inner membrane. Channel that opens in response to stretch forces in the membrane lipid bilayer. May participate in the regulation of osmotic pressure changes within the cell. In Pseudomonas entomophila (strain L48), this protein is Large-conductance mechanosensitive channel.